Here is a 474-residue protein sequence, read N- to C-terminus: UDP-N-acetylmuramate--L-alanine ligase (474 aa).

G123–T129 lines the ATP pocket.

This sequence belongs to the MurCDEF family.

The protein localises to the cytoplasm. It carries out the reaction UDP-N-acetyl-alpha-D-muramate + L-alanine + ATP = UDP-N-acetyl-alpha-D-muramoyl-L-alanine + ADP + phosphate + H(+). It participates in cell wall biogenesis; peptidoglycan biosynthesis. Cell wall formation. The polypeptide is UDP-N-acetylmuramate--L-alanine ligase (Alcanivorax borkumensis (strain ATCC 700651 / DSM 11573 / NCIMB 13689 / SK2)).